The chain runs to 132 residues: MKSLSVSLVVLWLLLNWVNSQQNVQQSPESLIVPEGARTSLNCTFSDSASQYFWWYRQHSGKAPKALMSIFSNGEKEEGRFTIHLNKASLHFSLHIRDSQPSDSALYLCAVTLYGGSGNKLIFGTGTLLSVK.

The signal sequence occupies residues 1–20 (MKSLSVSLVVLWLLLNWVNS). The interval 21–113 (QQNVQQSPES…SALYLCAVTL (93 aa)) is v segment. The N-linked (GlcNAc...) asparagine glycan is linked to N42. A d segment region spans residues 114–117 (YGGS). The tract at residues 118–132 (GNKLIFGTGTLLSVK) is j segment.

The polypeptide is T-cell receptor alpha chain V region 2B4 (Mus musculus (Mouse)).